Consider the following 443-residue polypeptide: Thymidine phosphorylase (443 aa).

The protein belongs to the thymidine/pyrimidine-nucleoside phosphorylase family. In terms of assembly, homodimer.

The catalysed reaction is thymidine + phosphate = 2-deoxy-alpha-D-ribose 1-phosphate + thymine. It functions in the pathway pyrimidine metabolism; dTMP biosynthesis via salvage pathway; dTMP from thymine: step 1/2. Its function is as follows. The enzymes which catalyze the reversible phosphorolysis of pyrimidine nucleosides are involved in the degradation of these compounds and in their utilization as carbon and energy sources, or in the rescue of pyrimidine bases for nucleotide synthesis. This is Thymidine phosphorylase from Shewanella baltica (strain OS155 / ATCC BAA-1091).